Consider the following 190-residue polypeptide: Probable nicotinate-nucleotide adenylyltransferase (190 aa).

Belongs to the NadD family.

The catalysed reaction is nicotinate beta-D-ribonucleotide + ATP + H(+) = deamido-NAD(+) + diphosphate. Its pathway is cofactor biosynthesis; NAD(+) biosynthesis; deamido-NAD(+) from nicotinate D-ribonucleotide: step 1/1. Catalyzes the reversible adenylation of nicotinate mononucleotide (NaMN) to nicotinic acid adenine dinucleotide (NaAD). This chain is Probable nicotinate-nucleotide adenylyltransferase, found in Borrelia hermsii (strain HS1 / DAH).